The chain runs to 227 residues: MTRKQMELLDFIKTRMDRDGVPPSFDEMKDALDLRSKSGIHRLITALEERGFIRRLAHRARAIEIVKLPEAMERAGFSARAAKAAAAPLPKGAVTVETAGALDLPLMGRIAAGLPIEAINGGPQSVTVPGMMLSGRGQHYALEVKGDSMIAAGINDGDIVVIREQQTADNGDIVVALVADHEATLKRYRRRGGMIALEPANDSYETQVYPEQMVKVQGRLVGLIRSY.

A DNA-binding region (H-T-H motif) is located at residues 25 to 45 (FDEMKDALDLRSKSGIHRLIT). Active-site for autocatalytic cleavage activity residues include S148 and K186.

It belongs to the peptidase S24 family. As to quaternary structure, homodimer.

The catalysed reaction is Hydrolysis of Ala-|-Gly bond in repressor LexA.. Its function is as follows. Represses a number of genes involved in the response to DNA damage (SOS response), including recA and lexA. In the presence of single-stranded DNA, RecA interacts with LexA causing an autocatalytic cleavage which disrupts the DNA-binding part of LexA, leading to derepression of the SOS regulon and eventually DNA repair. The polypeptide is LexA repressor (Cereibacter sphaeroides (strain ATCC 17029 / ATH 2.4.9) (Rhodobacter sphaeroides)).